Reading from the N-terminus, the 86-residue chain is Small ribosomal subunit protein uS17 (86 aa).

Belongs to the universal ribosomal protein uS17 family. Part of the 30S ribosomal subunit.

Functionally, one of the primary rRNA binding proteins, it binds specifically to the 5'-end of 16S ribosomal RNA. This Roseiflexus castenholzii (strain DSM 13941 / HLO8) protein is Small ribosomal subunit protein uS17.